Consider the following 239-residue polypeptide: Prolyl hydroxylase EGLN3 (239 aa).

Residues 62–73 (AGPRAGVSKRHL) are beta(2)beta(3) 'finger-like' loop. The interval 88–104 (CEAINFLLSLIDRLVLY) is required for interaction with ADRB2. The Fe2OG dioxygenase domain occupies 116-214 (ERSKAMVACY…RYAMTVWYFD (99 aa)). Residues His135, Asp137, and His196 each contribute to the Fe cation site. Arg205 provides a ligand contact to 2-oxoglutarate.

In terms of assembly, interacts with ADRB2; the interaction hydroxylates ADRB2 facilitating its ubiquitination by the VHL-E3 ligase complex. Interacts with PKM; the interaction hydroxylates PKM in hypoxia. Interacts with WDR83; the interaction leads to almost complete elimination of HIF-mediated reporter activity. Interacts with BCL2 (via its BH4 domain); the interaction disrupts the BAX-BCL4 complex inhibiting the anti-apoptotic activity of BCL2. Interacts with LIMD1, WTIP and AJUBA. Fe(2+) is required as a cofactor. It depends on L-ascorbate as a cofactor. In terms of processing, ubiquitinated by SIAH1 and/or SIAH2 in response to the unfolded protein response (UPR), leading to its degradation. Highly expressed in cardiac and smooth muscle. Also high expression in brain, skeletal muscle and kidney. Low levels in lung.

Its subcellular location is the nucleus. The protein localises to the cytoplasm. It carries out the reaction L-prolyl-[protein] + 2-oxoglutarate + O2 = trans-4-hydroxy-L-prolyl-[protein] + succinate + CO2. The enzyme catalyses L-prolyl-[hypoxia-inducible factor alpha subunit] + 2-oxoglutarate + O2 = trans-4-hydroxy-L-prolyl-[hypoxia-inducible factor alpha subunit] + succinate + CO2. Prolyl hydroxylase that mediates hydroxylation of proline residues in target proteins, such as PKM, TELO2, ATF4 and HIF1A. Target proteins are preferentially recognized via a LXXLAP motif. Cellular oxygen sensor that catalyzes, under normoxic conditions, the post-translational formation of 4-hydroxyproline in hypoxia-inducible factor (HIF) alpha proteins. Hydroxylates a specific proline found in each of the oxygen-dependent degradation (ODD) domains (N-terminal, NODD, and C-terminal, CODD) of HIF1A. Also hydroxylates HIF2A. Has a preference for the CODD site for both HIF1A and HIF2A. Hydroxylation on the NODD site by EGLN3 appears to require prior hydroxylation on the CODD site. Hydroxylated HIFs are then targeted for proteasomal degradation via the von Hippel-Lindau ubiquitination complex. Under hypoxic conditions, the hydroxylation reaction is attenuated allowing HIFs to escape degradation resulting in their translocation to the nucleus, heterodimerization with HIF1B, and increased expression of hypoxy-inducible genes. ELGN3 is the most important isozyme in limiting physiological activation of HIFs (particularly HIF2A) in hypoxia. Also hydroxylates PKM in hypoxia, limiting glycolysis. Under normoxia, hydroxylates and regulates the stability of ADRB2. Regulator of cardiomyocyte and neuronal apoptosis. In cardiomyocytes, inhibits the anti-apoptotic effect of BCL2 by disrupting the BAX-BCL2 complex. In neurons, has a NGF-induced proapoptotic effect, probably through regulating CASP3 activity. Also essential for hypoxic regulation of neutrophilic inflammation. Plays a crucial role in DNA damage response (DDR) by hydroxylating TELO2, promoting its interaction with ATR which is required for activation of the ATR/CHK1/p53 pathway. Also mediates hydroxylation of ATF4, leading to decreased protein stability of ATF4. The chain is Prolyl hydroxylase EGLN3 from Mus musculus (Mouse).